The sequence spans 266 residues: Mitochondrial genome maintenance protein MGM101 (266 aa).

The N-terminal 23 residues, 1–23 (MLHSTKLVFRATPQALCFPVRSY), are a transit peptide targeting the mitochondrion. Polar residues-rich tracts occupy residues 37–47 (KTTSKLAPSIT) and 57–68 (PSLQEPQSATST). The disordered stretch occupies residues 37 to 68 (KTTSKLAPSITTEDEVAEQDPSLQEPQSATST).

This sequence belongs to the MGM101 family. As to quaternary structure, forms homooligomers in vitro.

The protein localises to the mitochondrion matrix. Its subcellular location is the mitochondrion nucleoid. Plays a role in the replication of the mitochondrial genome and the maintenance of its telomeres. Able to catalyze strand annealing and D-loop formation. Binds a wide variety of DNA substrates. Exhibited the highest affinity for DNA molecules carrying 3' ssDNA overhangs (Y-form, 3' FLAP, 3' overhang) and for substrates with complex structures (X-O and Fork). Forms homogeneous ring-shaped structures at the ssDNA native telomeres ends. Oligomers seem to bind to the ssDNA as a filament until they reach the double-stranded region and induce the formation of bends and loops within the double-stranded part of the molecules. This chain is Mitochondrial genome maintenance protein MGM101, found in Candida parapsilosis (strain CDC 317 / ATCC MYA-4646) (Yeast).